We begin with the raw amino-acid sequence, 266 residues long: MSAVDTPTGAASSSKPDQNEQNGQNGGREDSGGFKLKFCTVCASNQNRSMEGHLRLSLANYPVISFGTGSLVRLPGPSITQPNVYKFNETSYDSIYRELEAKDPRLYRANGLLNMLGRNRQVKWGPERWQDWQIGMPRTKHKDDKGADGMEGGVADVVITCEERCWDAVIEDLLNRGSPLNRPVHVINIDIKDNHEEASVGGRAIVDLADSLNKIAAEEREKVGASAFDSGSVGARSGFDERVPDVLAEWQERWPNLPATWTLAWF.

The interval 1–31 (MSAVDTPTGAASSSKPDQNEQNGQNGGREDS) is disordered. Over residues 9-23 (GAASSSKPDQNEQNG) the composition is skewed to polar residues.

This sequence belongs to the SSU72 phosphatase family. Component of the cleavage and polyadenylation factor (CPF) complex.

It localises to the nucleus. It catalyses the reaction O-phospho-L-seryl-[protein] + H2O = L-seryl-[protein] + phosphate. The catalysed reaction is O-phospho-L-threonyl-[protein] + H2O = L-threonyl-[protein] + phosphate. Processively dephosphorylates Ser-5 of the heptad repeats YSPTSPS in the C-terminal domain of the largest RNA polymerase II subunit (rpb-1). Functionally, component of the cleavage and polyadenylation factor (CPF) complex, which plays a key role in polyadenylation-dependent pre-mRNA 3'-end formation and cooperates with cleavage factors including the CFIA complex and NAB4/CFIB. Ssu-72 is required for 3'-end formation of snoRNAs. The chain is RNA polymerase II subunit A C-terminal domain phosphatase ssu-72 (ssu-72) from Neurospora crassa (strain ATCC 24698 / 74-OR23-1A / CBS 708.71 / DSM 1257 / FGSC 987).